We begin with the raw amino-acid sequence, 989 residues long: Voltage-gated delayed rectifier potassium channel KCNH1 (989 aa).

The Cytoplasmic portion of the chain corresponds to 1–220; sequence MTMAGGRRGL…LHYCVFKTTW (220 aa). The PAS domain occupies 14–94; the sequence is QNTFLENIVR…QTFENYEMNS (81 aa). The region spanning 93 to 145 is the PAC domain; the sequence is NSFEILMYKKNRTPVWFFVKIAPIRNEQDKVVLFLCTFSDITAFKQPIEDDSC. The required for phosphatidylinositol bisphosphate binding stretch occupies residues 151 to 162; it reads FARLTRALTSSR. Residues 221–241 form a helical membrane-spanning segment; sequence DWIILILTFYTAILVPYNVSF. Residues 242–248 are Extracellular-facing; that stretch reads KTRQNNV. The helical transmembrane segment at 249-269 threads the bilayer; sequence AWLVVDSIVDVIFLVDIVLNF. Residues 270 to 290 are Cytoplasmic-facing; sequence HTTFVGPAGEVISDPKLIRMN. The helical transmembrane segment at 291–309 threads the bilayer; the sequence is YLKTWFVIDLLSCLPYDVI. Residues 310-345 lie on the Extracellular side of the membrane; that stretch reads NAFENVDEVSAFMGDPGKIGFADQIPPPLEGRESQG. The chain crosses the membrane as a helical; Voltage-sensor span at residues 346–368; sequence ISSLFSSLKVVRLLRLGRVARKL. The Cytoplasmic segment spans residues 369–377; it reads DHYIEYGAA. The helical transmembrane segment at 378 to 399 threads the bilayer; the sequence is VLVLLVCVFGLAAHWMACIWYS. Residues 400 to 448 lie on the Extracellular side of the membrane; sequence IGDYEIFDEDTKTIRNNSWLYQLALDIGTPYQFNGSGSGKWEGGPSKNS. N-linked (GlcNAc...) asparagine glycans are attached at residues Asn-415 and Asn-433. An intramembrane region (pore-forming) is located at residues 449 to 470; that stretch reads VYISSLYFTMTSLTSVGFGNIA. Residues 463–468 carry the Selectivity filter motif; the sequence is SVGFGN. At 471-477 the chain is on the extracellular side; that stretch reads PSTDIEK. The helical transmembrane segment at 478-498 threads the bilayer; it reads IFAVAIMMIGSLLYATIFGNV. The Cytoplasmic portion of the chain corresponds to 499-989; that stretch reads TTIFQQMYAN…ESDRDIFGAS (491 aa). Positions 673-770 are calmodulin-binding; the sequence is KRDALQKVLE…LDDLDVEKGN (98 aa). Residues 699 to 701 are interaction with cyclic nucleotide-binding pocket; sequence YNL. 2 stretches are compositionally biased toward basic and acidic residues: residues 857 to 879 and 887 to 901; these read ESME…KTDS and SDLR…RSPQ. 2 disordered regions span residues 857-905 and 961-989; these read ESME…DRSP and RGSA…FGAS. The tract at residues 924 to 964 is CAD (involved in subunit assembly); sequence ATVLEVKYELKEDIKALNAKMTSIEKQLSEILRILMSRGSA. Residues 962–979 show a composition bias toward polar residues; sequence GSAQSPQETGEISRPQSP. 3 positions are modified to phosphoserine: Ser-974, Ser-978, and Ser-981. Basic and acidic residues predominate over residues 980–989; sequence ESDRDIFGAS.

It belongs to the potassium channel family. H (Eag) (TC 1.A.1.20) subfamily. Kv10.1/KCNH1 sub-subfamily. In terms of assembly, homomultimer. The potassium channel is composed of a homo- or heterotetrameric complex of pore-forming alpha subunits that can associate with modulating beta subunits. Heteromultimer with KCNH5/EAG2. Interacts with ALG10B. Interacts with RABEP1. Interacts (via C-terminus) with CTTN. Interacts (via C-terminal cytoplasmic region) with Ca(2+)-bound calmodulin. In terms of processing, channel activity is regulated via tyrosine phosphorylation/dephosphorylation by SRC and PTPN6. Detected in brain (at protein level). Highly expressed in olfactory bulb. Detected in brain cortex, hippocampus, brain stem, striatum, thalamus, hypothalamus and spinal cord.

It localises to the cell membrane. The protein resides in the nucleus inner membrane. Its subcellular location is the cell projection. It is found in the dendrite. The protein localises to the axon. It localises to the presynaptic cell membrane. The protein resides in the perikaryon. Its subcellular location is the postsynaptic density membrane. It is found in the early endosome membrane. It catalyses the reaction K(+)(in) = K(+)(out). With respect to regulation, channel activity is inhibited by interaction with Ca(2+)-bound calmodulin. Interaction of a single pore-forming alpha subunit with a calmodulin chain is sufficient to promote channel closure. Channel activity is not regulated by cyclic nucleotides. Channel activity is inhibited by binding intracellular phosphatidylinositol-3,5-bisphosphate and phosphatidylinositol-4,5-bisphosphate (PIP2), but is not inhibited by phosphatidylinositol 4-phosphate. Functionally, pore-forming (alpha) subunit of a voltage-gated delayed rectifier potassium channel that mediates outward-rectifying potassium currents which, on depolarization, reaches a steady-state level and do not inactivate. The activation kinetics depend on the prepulse potential and external divalent cation concentration. With negative prepulses, the current activation is delayed and slowed down several fold, whereas more positive prepulses speed up activation. The time course of activation is biphasic with a fast and a slowly activating current component. Activates at more positive membrane potentials and exhibit a steeper activation curve. Channel properties are modulated by subunit assembly. Mediates IK(NI) current in myoblasts. Involved in the regulation of cell proliferation and differentiation, in particular adipogenic and osteogenic differentiation in bone marrow-derived mesenchymal stem cells (MSCs). This chain is Voltage-gated delayed rectifier potassium channel KCNH1, found in Mus musculus (Mouse).